The chain runs to 414 residues: tRNA(Ile)-lysidine synthase (414 aa).

17–22 (SGGCDS) contributes to the ATP binding site.

This sequence belongs to the tRNA(Ile)-lysidine synthase family.

The protein resides in the cytoplasm. It catalyses the reaction cytidine(34) in tRNA(Ile2) + L-lysine + ATP = lysidine(34) in tRNA(Ile2) + AMP + diphosphate + H(+). Its function is as follows. Ligates lysine onto the cytidine present at position 34 of the AUA codon-specific tRNA(Ile) that contains the anticodon CAU, in an ATP-dependent manner. Cytidine is converted to lysidine, thus changing the amino acid specificity of the tRNA from methionine to isoleucine. This Exiguobacterium sibiricum (strain DSM 17290 / CCUG 55495 / CIP 109462 / JCM 13490 / 255-15) protein is tRNA(Ile)-lysidine synthase.